The following is a 700-amino-acid chain: Polyribonucleotide nucleotidyltransferase (700 aa).

Mg(2+) is bound by residues Asp-491 and Asp-497. The KH domain maps to 558-617; sequence PNYAVIEINPDKIRDVIGKGGATIRQLTEETGAVIDIDDAGTIRIFGENKAATKAAIAKI. The S1 motif domain occupies 627-695; sequence GKTYEGTVAR…NRGRIKLTMK (69 aa).

The protein belongs to the polyribonucleotide nucleotidyltransferase family. Component of the RNA degradosome, which is a multiprotein complex involved in RNA processing and mRNA degradation. Mg(2+) is required as a cofactor.

It localises to the cytoplasm. It carries out the reaction RNA(n+1) + phosphate = RNA(n) + a ribonucleoside 5'-diphosphate. Functionally, involved in mRNA degradation. Catalyzes the phosphorolysis of single-stranded polyribonucleotides processively in the 3'- to 5'-direction. This is Polyribonucleotide nucleotidyltransferase from Psychrobacter arcticus (strain DSM 17307 / VKM B-2377 / 273-4).